Reading from the N-terminus, the 1198-residue chain is Chromosome partition protein Smc (1198 aa).

40 to 47 is a binding site for ATP; the sequence is PNGSGKSN. 2 coiled-coil regions span residues 175 to 211 and 322 to 524; these read ITKY…GQLG and LGEQ…LAKK. One can recognise an SMC hinge domain in the interval 534 to 647; sequence CGTLADLLQV…VTDMEAATRV (114 aa). Positions 687–1042 form a coiled coil; it reads SREIQELRQE…AELDKTMSER (356 aa). The segment at 785–818 is disordered; it reads AEEQSKLTDSIQEAQEALARQEEKNRQASREMEQ. A compositionally biased stretch (basic and acidic residues) spans 803–818; it reads ARQEEKNRQASREMEQ.

Belongs to the SMC family. In terms of assembly, homodimer.

Its subcellular location is the cytoplasm. Required for chromosome condensation and partitioning. In Desulfitobacterium hafniense (strain Y51), this protein is Chromosome partition protein Smc.